Reading from the N-terminus, the 318-residue chain is Ferrochelatase (318 aa).

Fe cation contacts are provided by His-186 and Glu-264.

The protein belongs to the ferrochelatase family.

It is found in the cytoplasm. The catalysed reaction is heme b + 2 H(+) = protoporphyrin IX + Fe(2+). The protein operates within porphyrin-containing compound metabolism; protoheme biosynthesis; protoheme from protoporphyrin-IX: step 1/1. In terms of biological role, catalyzes the ferrous insertion into protoporphyrin IX. In Chlamydia felis (strain Fe/C-56) (Chlamydophila felis), this protein is Ferrochelatase.